The chain runs to 317 residues: L-lactate dehydrogenase 1 (317 aa).

NAD(+) contacts are provided by residues Val17, Asp38, Lys43, Tyr69, and 83–84 (GA). Residues Gln86 and Arg92 each coordinate substrate. NAD(+) is bound by residues Ser105, 122–124 (ATN), and Ser147. 124 to 127 (NPVD) provides a ligand contact to substrate. Substrate is bound at residue 152 to 155 (DSAR). His179 (proton acceptor) is an active-site residue. Tyr223 is subject to Phosphotyrosine. Thr232 contributes to the substrate binding site.

This sequence belongs to the LDH/MDH superfamily. LDH family. Homotetramer.

It localises to the cytoplasm. The enzyme catalyses (S)-lactate + NAD(+) = pyruvate + NADH + H(+). It participates in fermentation; pyruvate fermentation to lactate; (S)-lactate from pyruvate: step 1/1. Its function is as follows. Catalyzes the conversion of lactate to pyruvate (Potential). Appears to be the primary factor that allows S.aureus growth during nitrosative stress in both aerobically and anaerobically cultured cells. This chain is L-lactate dehydrogenase 1, found in Staphylococcus aureus (strain bovine RF122 / ET3-1).